A 248-amino-acid polypeptide reads, in one-letter code: Proteasome subunit alpha type-7 (248 aa).

Serine 130 is a glycosylation site (O-linked (GlcNAc) serine). At tyrosine 153 the chain carries Phosphotyrosine; by ABL1 and ABL2. The residue at position 227 (lysine 227) is an N6-acetyllysine.

It belongs to the peptidase T1A family. The 26S proteasome consists of a 20S proteasome core and two 19S regulatory subunits. The 20S proteasome core is a barrel-shaped complex made of 28 subunits that are arranged in four stacked rings. The two outer rings are each formed by seven alpha subunits, and the two inner rings are formed by seven beta subunits. The proteolytic activity is exerted by three beta-subunits PSMB5, PSMB6 and PSMB7. PSMA7 interacts directly with the PSMG1-PSMG2 heterodimer which promotes 20S proteasome assembly. Interacts with HIF1A. Interacts with RAB7A. Interacts with PRKN. Interacts with ABL1 and ABL2. Interacts with EMAP2. Interacts with MAVS. Phosphorylation by ABL1 or ABL2 leads to an inhibition of proteasomal activity and cell cycle transition blocks. As to expression, detected in liver (at protein level).

It is found in the cytoplasm. Its subcellular location is the nucleus. Functionally, component of the 20S core proteasome complex involved in the proteolytic degradation of most intracellular proteins. This complex plays numerous essential roles within the cell by associating with different regulatory particles. Associated with two 19S regulatory particles, forms the 26S proteasome and thus participates in the ATP-dependent degradation of ubiquitinated proteins. The 26S proteasome plays a key role in the maintenance of protein homeostasis by removing misfolded or damaged proteins that could impair cellular functions, and by removing proteins whose functions are no longer required. Associated with the PA200 or PA28, the 20S proteasome mediates ubiquitin-independent protein degradation. This type of proteolysis is required in several pathways including spermatogenesis (20S-PA200 complex) or generation of a subset of MHC class I-presented antigenic peptides (20S-PA28 complex). The chain is Proteasome subunit alpha type-7 (Psma7) from Mus musculus (Mouse).